Consider the following 128-residue polypeptide: Riboflavin kinase (128 aa).

12–17 is a CDP binding site; sequence GKGEGK. Residues T41 and N43 each contribute to the Mg(2+) site. The FMN site is built by T97 and E105. Residue 110-113 coordinates CDP; the sequence is IKLR.

Belongs to the archaeal riboflavin kinase family. Mg(2+) serves as cofactor.

The enzyme catalyses riboflavin + CTP = CDP + FMN + H(+). It functions in the pathway cofactor biosynthesis; FMN biosynthesis; FMN from riboflavin (CTP route): step 1/1. Its function is as follows. Catalyzes the CTP-dependent phosphorylation of riboflavin (vitamin B2) to form flavin mononucleotide (FMN). This chain is Riboflavin kinase, found in Methanococcus aeolicus (strain ATCC BAA-1280 / DSM 17508 / OCM 812 / Nankai-3).